The following is a 341-amino-acid chain: Spindolin (341 aa).

Residues 1–20 (MNKLILISLIASLYQVEVDA) form the signal peptide.

As to quaternary structure, homodimer; disulfide-linked.

Its function is as follows. This protein is a spindle body protein. The protein is Spindolin (SPH) of Choristoneura biennis entomopoxvirus (CbEPV).